Consider the following 133-residue polypeptide: Protein msa (133 aa).

A run of 4 helical transmembrane segments spans residues 3 to 23 (YLIL…AIGL), 27 to 47 (ILAA…ILFF), 55 to 75 (YIFF…VHLM), and 103 to 123 (FGFD…IILY).

Its subcellular location is the cell membrane. Accessory element involved in the expression of sarA and several virulence factors. Modulates SarA production and/or function in a strain-dependent manner. Affects the transcription of the accessory gene regulator (agr) and genes encoding virulence factors including alpha toxin (hla) and protein A (spa). This Staphylococcus aureus (strain bovine RF122 / ET3-1) protein is Protein msa (msa).